Reading from the N-terminus, the 736-residue chain is Eukaryotic translation initiation factor 3 subunit B (736 aa).

The sufficient for interaction with HCR1 and TIF32 stretch occupies residues 1-94 (MAAVFDDIRL…LFIEFEDAGA (94 aa)). Residues 1–219 (MAAVFDDIRL…GIASWGGPQF (219 aa)) form a sufficient for interaction with PIC8 region. The RRM domain occupies 37–120 (RYVVVDGAPV…HRLWVNGLDD (84 aa)). WD repeat units follow at residues 140–182 (EFEA…PENV), 186–224 (RRNWSNSILNFSPHGTYLFSFHDQGIASWGGPQFKRLRR), 226–244 (AHPDVKAISMSSTEKYLVT), 245–284 (FSSEPLEVSDEPNEACPFGPESRGHQLCIWDVATGVCVKT), 288–328 (PPQQ…QLLG), 332–375 (MKIE…QSCK), 443–483 (EIKD…VSFY), 511–557 (AIDG…TEKI), 566–604 (ATLRDVAHINYASATDYEWDPSGRYLAFWSSAWKHKAEN), and 616–662 (VREE…QDAM).

This sequence belongs to the eIF-3 subunit B family. In terms of assembly, component of the eukaryotic translation initiation factor 3 (eIF-3) complex.

The protein resides in the cytoplasm. Functionally, RNA-binding component of the eukaryotic translation initiation factor 3 (eIF-3) complex, which is involved in protein synthesis of a specialized repertoire of mRNAs and, together with other initiation factors, stimulates binding of mRNA and methionyl-tRNAi to the 40S ribosome. The eIF-3 complex specifically targets and initiates translation of a subset of mRNAs involved in cell proliferation. In Eremothecium gossypii (strain ATCC 10895 / CBS 109.51 / FGSC 9923 / NRRL Y-1056) (Yeast), this protein is Eukaryotic translation initiation factor 3 subunit B.